The primary structure comprises 204 residues: Photosystem I reaction center subunit II-2, chloroplastic (204 aa).

A chloroplast-targeting transit peptide spans M1–A44. Phosphothreonine is present on T47. The segment at T47–N71 is disordered. Residues R137–T145 form a ferredoxin and ferredoxin-oxidoreductase binding region.

Belongs to the PsaD family. As to quaternary structure, interacts with CURT1C.

The protein resides in the plastid. It localises to the chloroplast thylakoid membrane. In terms of biological role, PSAD can form complexes with ferredoxin and ferredoxin-oxidoreductase in photosystem I (PS I) reaction center. PSAD may encode the ferredoxin-docking protein. The sequence is that of Photosystem I reaction center subunit II-2, chloroplastic (PSAD2) from Arabidopsis thaliana (Mouse-ear cress).